The following is a 134-amino-acid chain: Small ribosomal subunit protein uS9 (134 aa).

Basic and acidic residues predominate over residues 98–114 (SKQELKSHGFLTRDPRK). Residues 98–134 (SKQELKSHGFLTRDPRKKERKKYGHKKARKSFQFSKR) form a disordered region. Residues 115-134 (KERKKYGHKKARKSFQFSKR) show a composition bias toward basic residues.

Belongs to the universal ribosomal protein uS9 family.

This Chlamydia caviae (strain ATCC VR-813 / DSM 19441 / 03DC25 / GPIC) (Chlamydophila caviae) protein is Small ribosomal subunit protein uS9.